The primary structure comprises 431 residues: Keratin, type I cytoskeletal 40 (431 aa).

The tract at residues methionine 1–glutamate 89 is head. The IF rod domain occupies glutamate 89–leucine 400. The coil 1A stretch occupies residues lysine 90–glutamine 124. The segment at cysteine 125–aspartate 135 is linker 1. Residues tyrosine 136 to glutamate 236 form a coil 1B region. Positions glutamine 237–leucine 252 are linker 12. The coil 2 stretch occupies residues aspartate 253–glutamate 396. Residues aspartate 397–leucine 431 form a tail region.

It belongs to the intermediate filament family. Heterotetramer of two type I and two type II keratins. As to expression, expressed in skin and scalp. Also very weakly expressed in tongue, breast, colon and small intestine. In the hair follicle, it is specifically present in the upper hair cuticle. Not present in the upper cortex (at protein level).

Its function is as follows. May play a role in late hair differentiation. In Homo sapiens (Human), this protein is Keratin, type I cytoskeletal 40 (KRT40).